Consider the following 431-residue polypeptide: Adenylosuccinate synthetase (431 aa).

Residues 12 to 18 and 40 to 42 contribute to the GTP site; these read GDEGKGK and GHT. Catalysis depends on Asp13, which acts as the Proton acceptor. Asp13 and Gly40 together coordinate Mg(2+). IMP is bound by residues 13 to 16, 38 to 41, Thr131, Arg145, Gln225, Thr240, and Arg304; these read DEGK and NAGH. His41 functions as the Proton donor in the catalytic mechanism. 300–306 serves as a coordination point for substrate; that stretch reads TVTGRKR. Residues Arg306, 332 to 334, and 414 to 416 each bind GTP; these read KLD and STS.

It belongs to the adenylosuccinate synthetase family. In terms of assembly, homodimer. Mg(2+) is required as a cofactor.

It localises to the cytoplasm. It carries out the reaction IMP + L-aspartate + GTP = N(6)-(1,2-dicarboxyethyl)-AMP + GDP + phosphate + 2 H(+). Its pathway is purine metabolism; AMP biosynthesis via de novo pathway; AMP from IMP: step 1/2. Its function is as follows. Plays an important role in the de novo pathway of purine nucleotide biosynthesis. Catalyzes the first committed step in the biosynthesis of AMP from IMP. The polypeptide is Adenylosuccinate synthetase (Roseobacter denitrificans (strain ATCC 33942 / OCh 114) (Erythrobacter sp. (strain OCh 114))).